The following is a 369-amino-acid chain: CASP-like protein 4U1 (369 aa).

Positions 1-162 (MASTPRTPAP…RAETKLPLSS (162 aa)) are disordered. At 1 to 222 (MASTPRTPAP…AVAAVAERRE (222 aa)) the chain is on the cytoplasmic side. Residues 7–23 (TPAPERSPPPVPTPPPP) are compositionally biased toward pro residues. Residues 36–51 (SPREEASFSSDGREGA) are compositionally biased toward basic and acidic residues. Composition is skewed to low complexity over residues 87–96 (ANKAAAATAE) and 114–127 (SSQT…SPTP). A helical transmembrane segment spans residues 223-243 (LLLALRLATAVLSLAAFSVIA). Residues 244–262 (SARTSGWAGDYYARHLQYR) lie on the Extracellular side of the membrane. A helical transmembrane segment spans residues 263-283 (YAVAVNVIVFAYSVAQSLGKI). Residues 284 to 300 (RHLVSPRFTFRTMSSYY) are Cytoplasmic-facing. The helical transmembrane segment at 301–321 (CSLFLDQVLAYLLMSASSAAA) threads the bilayer. Residues 322-339 (SRNDLWVSRFGTDAFVRK) are Extracellular-facing. Residues 340 to 360 (ITGALWLSFVAFLVLALNAVI) form a helical membrane-spanning segment. Topologically, residues 361 to 369 (SXANLFSMV) are cytoplasmic.

The protein belongs to the Casparian strip membrane proteins (CASP) family. As to quaternary structure, homodimer and heterodimers.

Its subcellular location is the cell membrane. This Zea mays (Maize) protein is CASP-like protein 4U1.